The chain runs to 133 residues: Protein Wnt-4 (133 aa).

The O-palmitoleoyl serine; by PORCN moiety is linked to residue S1. 2 disulfides stabilise this stretch: C69/C114 and C99/C109. A glycan (N-linked (GlcNAc...) asparagine) is linked at N100.

Belongs to the Wnt family. Post-translationally, palmitoleoylation is required for efficient binding to frizzled receptors. Depalmitoleoylation leads to Wnt signaling pathway inhibition.

Its subcellular location is the secreted. It localises to the extracellular space. The protein localises to the extracellular matrix. Its function is as follows. Ligand for members of the frizzled family of seven transmembrane receptors. Plays an important role in embryonic development. The protein is Protein Wnt-4 (WNT-4) of Strongylocentrotus purpuratus (Purple sea urchin).